Reading from the N-terminus, the 370-residue chain is NSFL1 cofactor p47 (370 aa).

Residues 54–73 (SQATPSSVSRGTAPSDNRVT) show a composition bias toward polar residues. Residues 54-116 (SQATPSSVSR…VGPPRKKSPN (63 aa)) form a disordered region. A phosphoserine mark is found at Ser74, Ser102, Ser114, and Ser140. The Nuclear localization signal motif lies at 109-115 (PPRKKSP). Phosphotyrosine is present on Tyr167. The short motif at 172 to 175 (KRQH) is the Nuclear localization signal element. Phosphoserine is present on residues Ser176, Ser192, and Ser272. The SEP domain maps to 179–244 (DVHVVLKLWK…MEDHRDEDFV (66 aa)). Over residues 261–287 (GSTAPQVLSTSSPAQQAENEAKASSSI) the composition is skewed to polar residues. The segment at 261 to 289 (GSTAPQVLSTSSPAQQAENEAKASSSILI) is disordered. The UBX domain occupies 291-368 (ESEPTTNIQI…NLLNAVIVQR (78 aa)).

It belongs to the NSFL1C family. As to quaternary structure, part of a ternary complex containing STX5A, NSFL1C and VCP. NSFL1C forms a homotrimer that binds to one end of a VCP homohexamer. The complex binds to membranes enriched in phosphatidylethanolamine-containing lipids and promotes Golgi membrane fusion. Interaction with VCIP135 leads to dissociation of the complex via ATP hydrolysis by VCP. Binds ubiquitin and mono-ubiquitinated proteins via its N-terminal UBA-like domain when bound to VCP. In terms of processing, phosphorylated during mitosis. Phosphorylation inhibits interaction with Golgi membranes and is required for the fragmentation of the Golgi stacks during mitosis.

It localises to the nucleus. The protein localises to the golgi apparatus. Its subcellular location is the golgi stack. It is found in the chromosome. The protein resides in the cytoplasm. It localises to the cytoskeleton. The protein localises to the microtubule organizing center. Its subcellular location is the centrosome. Its function is as follows. Reduces the ATPase activity of VCP. Necessary for the fragmentation of Golgi stacks during mitosis and for VCP-mediated reassembly of Golgi stacks after mitosis. May play a role in VCP-mediated formation of transitional endoplasmic reticulum (tER). Inhibits the activity of CTSL (in vitro). Together with UBXN2B/p37, regulates the centrosomal levels of kinase AURKA/Aurora A during mitotic progression by promoting AURKA removal from centrosomes in prophase. Also, regulates spindle orientation during mitosis. In Homo sapiens (Human), this protein is NSFL1 cofactor p47 (NSFL1C).